The primary structure comprises 196 residues: Oplophorus-luciferin 2-monooxygenase catalytic subunit (196 aa).

A signal peptide spans 1-27 (MAYSTLFIIALTAVVTQASSTQKSNLT).

Heterotetramer of a catalytic 19 kDa and a non-catalytic 35 kDa subunit.

Its subcellular location is the secreted. It catalyses the reaction coelenterazine + O2 = coelenteramide + hnu + CO2. Inhibited by micromolar Cu(2+). Functionally, catalytic subunit of oplophorus-luciferin 2-monooxygenase. Oxidoreductase that converts coelenterazine (the oplophorus luciferin) to coelenteramide under emission of blue light with a maximum at 454 nm. Is also active with bisdeoxycoelenterazine. This is Oplophorus-luciferin 2-monooxygenase catalytic subunit from Oplophorus gracilirostris (Luminous shrimp).